A 302-amino-acid polypeptide reads, in one-letter code: Riboflavin transporter (302 aa).

8 helical membrane passes run 16–36 (AVVG…LNVV), 44–64 (LAFP…LFSL), 87–107 (VVLA…VPIW), 109–129 (AIAL…LFLG), 158–178 (IGWA…SSLI), 191–213 (ITVW…AGFA), 227–247 (GLLT…ADAA), and 264–284 (GWLF…ALIL). 2 EamA domains span residues 30–151 (FSLL…MIIL) and 170–291 (LLWG…LFIM).

This sequence belongs to the drug/metabolite transporter (DMT) superfamily. 10 TMS drug/metabolite exporter (DME) (TC 2.A.7.3) family.

It is found in the cell membrane. Functionally, transports riboflavin into the cell. Can also transport FMN and FAD. Required for normal nodule development during colonization of pea plant roots. In Rhizobium johnstonii (strain DSM 114642 / LMG 32736 / 3841) (Rhizobium leguminosarum bv. viciae), this protein is Riboflavin transporter.